Reading from the N-terminus, the 600-residue chain is DNA mismatch repair protein MutL (600 aa).

The disordered stretch occupies residues 327 to 405 (DGSRAATTGA…FSPQPAAAEP (79 aa)). A compositionally biased stretch (polar residues) spans 349 to 367 (PNSQRPQTAWSAETSSSRP).

The protein belongs to the DNA mismatch repair MutL/HexB family.

Its function is as follows. This protein is involved in the repair of mismatches in DNA. It is required for dam-dependent methyl-directed DNA mismatch repair. May act as a 'molecular matchmaker', a protein that promotes the formation of a stable complex between two or more DNA-binding proteins in an ATP-dependent manner without itself being part of a final effector complex. The protein is DNA mismatch repair protein MutL of Rhizobium johnstonii (strain DSM 114642 / LMG 32736 / 3841) (Rhizobium leguminosarum bv. viciae).